The sequence spans 352 residues: Putative formin-like protein 15b (352 aa).

Residues 1 to 350 form the FH2 domain; it reads MTLFNFIKLF…KDAKEAEMEK (350 aa).

The protein belongs to the formin-like family. Class-II subfamily.

The sequence is that of Putative formin-like protein 15b (FH15B) from Arabidopsis thaliana (Mouse-ear cress).